Reading from the N-terminus, the 443-residue chain is UPF0597 protein Dvul_2496 (443 aa).

The disordered stretch occupies residues 156 to 178; the sequence is GMERAPEADGTLHGGASCEPSAS.

The protein belongs to the UPF0597 family.

The polypeptide is UPF0597 protein Dvul_2496 (Nitratidesulfovibrio vulgaris (strain DP4) (Desulfovibrio vulgaris)).